A 155-amino-acid chain; its full sequence is Small ribosomal subunit protein uS7c (155 aa).

It belongs to the universal ribosomal protein uS7 family. As to quaternary structure, part of the 30S ribosomal subunit.

It is found in the plastid. The protein resides in the chloroplast. One of the primary rRNA binding proteins, it binds directly to 16S rRNA where it nucleates assembly of the head domain of the 30S subunit. The polypeptide is Small ribosomal subunit protein uS7c (rps7) (Allium textile (Textile onion)).